Consider the following 391-residue polypeptide: GATA-binding factor 6-B (391 aa).

The span at 57–69 (GTHSVNSHWSQAT) shows a compositional bias: polar residues. Positions 57 to 107 (GTHSVNSHWSQATSESSSYSSSSPHPSSRYHYSPSPPMANGSTRDTGYSSS) are disordered. The span at 70-89 (SESSSYSSSSPHPSSRYHYS) shows a compositional bias: low complexity. Residues 96 to 107 (NGSTRDTGYSSS) show a composition bias toward polar residues. 2 GATA-type zinc fingers span residues 182–206 (CVNC…CNAC) and 236–260 (CANC…CNAC). Residues 277–334 (KEGIQTRKRKPKNLNKSKSSSSNGNSSHHITMTPTSTTSSTNSDDCIKNGSPSQNTAP) form a disordered region. The segment covering 282–291 (TRKRKPKNLN) has biased composition (basic residues). Residues 292 to 319 (KSKSSSSNGNSSHHITMTPTSTTSSTNS) show a composition bias toward low complexity.

In terms of tissue distribution, in embryos, expressed in the presumptive heart mesoderm. In adults, widely distributed but predominant in the heart.

It localises to the nucleus. Its function is as follows. Transcriptional activator that binds 5'-GATA-3'-containing motifs within gene promoters. Regulates cardiac-specific transcription during embryogenesis and thereby cardiogenesis. This chain is GATA-binding factor 6-B (gata6-b), found in Xenopus laevis (African clawed frog).